The chain runs to 266 residues: Apolipoprotein A-I (266 aa).

An N-terminal signal peptide occupies residues 1–18 (MKAVVLTLAVLFLTGSQA). Tandem repeats lie at residues 67-88 (LKLL…EQIG) and 89-110 (PVTQ…QEMN). The segment at 67 to 266 (LKLLDNWDTL…DEATKKLNAQ (200 aa)) is 10 X approximate tandem repeats. A Methionine sulfoxide modification is found at Met109. The 3; half-length repeat unit spans residues 111–121 (KDLEEVKKKVQ). 5 consecutive repeat copies span residues 122–143 (PYLD…QKVA), 144–165 (PLGA…EKLS), 166–187 (PLGE…AQLA), 188–209 (PYSD…EGGG), and 210–231 (AALA…EKAK). The stretch at 232–242 (PALEDLRQGLL) is one 9; half-length repeat. Copy 10 of the repeat occupies 243-266 (PVLESFRTSLLAAVDEATKKLNAQ).

This sequence belongs to the apolipoprotein A1/A4/E family. As to quaternary structure, homodimer. Interacts with APOA1BP and CLU. Component of a sperm activating protein complex (SPAP), consisting of APOA1, an immunoglobulin heavy chain, an immunoglobulin light chain and albumin. Interacts with NDRG1. Interacts with SCGB3A2. Interacts with NAXE and YJEFN3. Post-translationally, glycosylated. In terms of processing, palmitoylated. Phosphorylation sites are present in the extracellular medium.

It localises to the secreted. Participates in the reverse transport of cholesterol from tissues to the liver for excretion by promoting cholesterol efflux from tissues and by acting as a cofactor for the lecithin cholesterol acyltransferase (LCAT). As part of the SPAP complex, activates spermatozoa motility. This chain is Apolipoprotein A-I (APOA1), found in Odobenus rosmarus divergens (Pacific walrus).